Reading from the N-terminus, the 445-residue chain is Argininosuccinate synthase (445 aa).

ATP-binding positions include 17-25 (AFSGGLDTS) and alanine 43. An L-citrulline-binding site is contributed by tyrosine 99. Residues glycine 129 and threonine 131 each contribute to the ATP site. Threonine 131, asparagine 135, and aspartate 136 together coordinate L-aspartate. Residue asparagine 135 coordinates L-citrulline. Residue aspartate 136 coordinates ATP. L-citrulline is bound by residues arginine 139 and serine 192. Position 194 (aspartate 194) interacts with ATP. Positions 201, 203, and 280 each coordinate L-citrulline.

It belongs to the argininosuccinate synthase family. Type 2 subfamily. In terms of assembly, homotetramer.

The protein resides in the cytoplasm. It carries out the reaction L-citrulline + L-aspartate + ATP = 2-(N(omega)-L-arginino)succinate + AMP + diphosphate + H(+). It functions in the pathway amino-acid biosynthesis; L-arginine biosynthesis; L-arginine from L-ornithine and carbamoyl phosphate: step 2/3. This is Argininosuccinate synthase from Bordetella pertussis (strain Tohama I / ATCC BAA-589 / NCTC 13251).